Reading from the N-terminus, the 493-residue chain is D-glyceraldehyde dehydrogenase (NADP(+)) (493 aa).

The stretch at 70–92 (RAKELIEKNRAELENIIMEENGK) forms a coiled coil. NADP(+)-binding positions include 146-149 (TPWN), arginine 157, 172-176 (KPSSD), 204-210 (RGSEIGD), 225-248 (GSTA…ILEL), cysteine 281, and 381-383 (EIF). Residues asparagine 149 and arginine 157 each contribute to the substrate site. The Proton acceptor role is filled by glutamate 247. Residue cysteine 281 participates in substrate binding. Cysteine 281 (proton donor) is an active-site residue.

It belongs to the aldehyde dehydrogenase family. Glyceraldehyde dehydrogenase subfamily. In terms of assembly, homotetramer. Dimer of dimers.

It carries out the reaction D-glyceraldehyde + NADP(+) + H2O = (R)-glycerate + NADPH + 2 H(+). The protein operates within carbohydrate degradation; glycolysis. With respect to regulation, inhibited by calcium, cadmium, copper and mercury ions. Stable for 2 hours at 60 degrees Celsius but activity is decreased to less than 50 percent within 20 minutes at 80 degrees Celsius. Two folds activity enhancement in the presence of 1 mM glutathione, DTT, or 2-mercaptoethanol. Complete activity inhibition by thiol-modifying reagents such as p-chloromercuribenzoic acid or p-hydroxy-mercuribenzoic acid. In terms of biological role, NADP-dependent dehydrogenase of the nED (non-phosphorylated Entner-Doudoroff) pathway with highest activity towards glyceraldehydes (e.g. D,L-glyceraldehyde and D-glyceraldehyde), to a lesser extent towards D,L-glyceraldehyde-3-phosphate and glycolaldehyde, but no activity towards aliphatic or aromatic aldehydes. In Thermoplasma acidophilum (strain ATCC 25905 / DSM 1728 / JCM 9062 / NBRC 15155 / AMRC-C165), this protein is D-glyceraldehyde dehydrogenase (NADP(+)).